Consider the following 423-residue polypeptide: Glycine amidinotransferase, mitochondrial (423 aa).

The transit peptide at 1–43 (MLRVRCLRGGSRGAEAVHYIGSRLGGSLTGWVQRTFQSTQAAT) directs the protein to the mitochondrion. Serine 46 and serine 49 each carry phosphoserine. Position 170 (aspartate 170) interacts with arginine. Catalysis depends on residues aspartate 254 and histidine 303. Positions 305, 322, 354, and 355 each coordinate arginine. Residue lysine 385 is modified to N6-acetyllysine. Residue cysteine 407 is the Amidino-cysteine intermediate of the active site.

The protein belongs to the amidinotransferase family. Homodimer. As to expression, highly expressed in the kidney and pancreas, especially in the proximal tubules of the kidney, and alpha cells of the pancreatic islets (at protein level). Moderately expressed in liver hepatocytes (at protein level). Expressed in the kidney, pancreas, liver, colon, ileum, jejunum, heart and skeletal muscle. In reproductive tissues, expressed in the testis, epididymis, ovary, oviduct and uterus. Expressed throughout the brain in neurons, astrocytes and oligodendrocytes. In 12.5 dpc embryos, it is expressed in the middle part of the somites, hepatic primordium and wall of the dorsal aorta. Expressed in 15.5 dpc embryos in isolated cells throughout the central nervous system, skeletal muscles, gonad primordia, caudal somites, liver and pancreas, but not in the choroid plexus, root ganglia or kidney. Expressed in skeletal muscle, kidney, pancreas, central nervous system, liver and intestine epithelial cells, but not in epidermis, dermis, olfactory epithelium, trachea, lung, stomach or heart in 18.5 dpc embryos.

Its subcellular location is the mitochondrion inner membrane. The catalysed reaction is L-arginine + glycine = guanidinoacetate + L-ornithine. The enzyme catalyses 4-aminobutanoate + L-arginine = 4-guanidinobutanoate + L-ornithine. It carries out the reaction beta-alanine + L-arginine = 3-guanidinopropanoate + L-ornithine. It catalyses the reaction taurine + L-arginine = taurocyamine + L-ornithine. It participates in amine and polyamine biosynthesis; creatine biosynthesis; creatine from L-arginine and glycine: step 1/2. Functionally, transamidinase that catalyzes the transfer of the amidino group of L-arginine onto the amino moiety of acceptor metabolites such as glycine, beta-alanine, gamma-aminobutyric acid (GABA) and taurine yielding the corresponding guanidine derivatives. Catalyzes the rate-limiting step of creatine biosynthesis, namely the transfer of the amidino group from L-arginine to glycine to generate guanidinoacetate, which is then methylated by GAMT to form creatine. Provides creatine as a source for ATP generation in tissues with high energy demands, in particular skeletal muscle, heart and brain. The chain is Glycine amidinotransferase, mitochondrial (Gatm) from Rattus norvegicus (Rat).